Reading from the N-terminus, the 317-residue chain is SWI/SNF-related matrix-associated actin-dependent regulator of chromatin subfamily E member 1-related (317 aa).

Residues 1–17 (MSHGPKQPGAAAAPAGG) are compositionally biased toward low complexity. Positions 1–71 (MSHGPKQPGA…RKKILPNGPK (71 aa)) are disordered. Lysine 31 participates in a covalent cross-link: Glycyl lysine isopeptide (Lys-Gly) (interchain with G-Cter in SUMO2). The segment covering 31-52 (KQERGEGPRAGEKGSHEEEPVK) has biased composition (basic and acidic residues). The span at 53-65 (KRGWPKGKKRKKI) shows a compositional bias: basic residues. Residues 70-138 (PKAPVTGYVR…QYMKELRAYQ (69 aa)) constitute a DNA-binding region (HMG box). Serine 160 bears the Phosphoserine mark. The stretch at 190–257 (EEFLDQNKAR…LQQQLQAVRQ (68 aa)) forms a coiled coil.

Component of a BHC histone deacetylase complex that contains HDAC1, HDAC2, HMG20B/BRAF35, KDM1A, RCOR1/CoREST and PHF21A/BHC80. The BHC complex may also contain ZMYM2, ZNF217, ZMYM3, GSE1 and GTF2I. Interacts with the BRCA2 tumor suppressor protein. Interacts with DTNB. As to expression, ubiquitously expressed in adult tissues.

The protein resides in the nucleus. Its subcellular location is the chromosome. Its function is as follows. Required for correct progression through G2 phase of the cell cycle and entry into mitosis. Required for RCOR1/CoREST mediated repression of neuronal specific gene promoters. This chain is SWI/SNF-related matrix-associated actin-dependent regulator of chromatin subfamily E member 1-related (HMG20B), found in Homo sapiens (Human).